Consider the following 447-residue polypeptide: GTPase Der (447 aa).

2 consecutive EngA-type G domains span residues Lys4–Glu165 and Leu180–Asn357. GTP-binding positions include Gly10 to Ser17, Asp57 to Leu61, Asn119 to Glu122, Gly186 to Ser193, Asp233 to Leu237, and Asn298 to Asp301. One can recognise a KH-like domain in the interval Lys358–Lys443.

Belongs to the TRAFAC class TrmE-Era-EngA-EngB-Septin-like GTPase superfamily. EngA (Der) GTPase family. As to quaternary structure, associates with the 50S ribosomal subunit.

Its function is as follows. GTPase that plays an essential role in the late steps of ribosome biogenesis. This Rickettsia typhi (strain ATCC VR-144 / Wilmington) protein is GTPase Der.